A 118-amino-acid polypeptide reads, in one-letter code: DNA-binding protein MmarC5_1518 (118 aa).

Over residues 1 to 12 the composition is skewed to basic and acidic residues; sequence MNPEEIRQRRLQ. The disordered stretch occupies residues 1-35; that stretch reads MNPEEIRQRRLQEMQAKAQEQGAEDPEAQRQAQEQ.

Belongs to the PDCD5 family.

In Methanococcus maripaludis (strain C5 / ATCC BAA-1333), this protein is DNA-binding protein MmarC5_1518.